We begin with the raw amino-acid sequence, 441 residues long: Ribosomal protein uS12 methylthiotransferase RimO (441 aa).

Positions 7–117 (PKISFVSLGC…VLEAVHRASP (111 aa)) constitute an MTTase N-terminal domain. [4Fe-4S] cluster contacts are provided by Cys16, Cys52, Cys81, Cys148, Cys152, and Cys155. The Radical SAM core domain maps to 134–371 (LTPRHYAYLK…MARQQKISAR (238 aa)). Residues 374 to 440 (KRKVGTRQQI…EYDLHGTVAG (67 aa)) enclose the TRAM domain.

Belongs to the methylthiotransferase family. RimO subfamily. [4Fe-4S] cluster serves as cofactor.

It localises to the cytoplasm. The catalysed reaction is L-aspartate(89)-[ribosomal protein uS12]-hydrogen + (sulfur carrier)-SH + AH2 + 2 S-adenosyl-L-methionine = 3-methylsulfanyl-L-aspartate(89)-[ribosomal protein uS12]-hydrogen + (sulfur carrier)-H + 5'-deoxyadenosine + L-methionine + A + S-adenosyl-L-homocysteine + 2 H(+). Its function is as follows. Catalyzes the methylthiolation of an aspartic acid residue of ribosomal protein uS12. This is Ribosomal protein uS12 methylthiotransferase RimO from Bradyrhizobium sp. (strain BTAi1 / ATCC BAA-1182).